Reading from the N-terminus, the 778-residue chain is Ral guanine nucleotide dissociation stimulator-like 2 (778 aa).

Residues Met1–Pro15 are compositionally biased toward low complexity. The tract at residues Met1 to Asp59 is disordered. Residues Asp33–Gly42 show a composition bias toward gly residues. The span at Gln43–Asp59 shows a compositional bias: acidic residues. The 125-residue stretch at Ser88–Arg212 folds into the N-terminal Ras-GEF domain. Positions Leu243–Pro513 constitute a Ras-GEF domain. Disordered stretches follow at residues Ser503–Pro524, Gly541–Ala564, Ser581–Ser647, and Arg735–Thr769. Over residues Ser581–Leu592 the composition is skewed to low complexity. Polar residues predominate over residues Cys620–Thr632. Positions Asp649–Arg736 constitute a Ras-associating domain. A compositionally biased stretch (low complexity) spans Ser738–Ser756.

In terms of assembly, interacts with SAMD9.

In terms of biological role, probable guanine nucleotide exchange factor. Putative effector of Ras and/or Rap. Associates with the GTP-bound form of Rap 1A and H-Ras in vitro. This is Ral guanine nucleotide dissociation stimulator-like 2 (Rgl2) from Mus musculus (Mouse).